Consider the following 180-residue polypeptide: Ribosome maturation factor RimM (180 aa).

A PRC barrel domain is found at 103–176 (GDIWWDRDLV…RIVVDPPPGL (74 aa)).

It belongs to the RimM family. Binds ribosomal protein uS19.

It localises to the cytoplasm. Functionally, an accessory protein needed during the final step in the assembly of 30S ribosomal subunit, possibly for assembly of the head region. Essential for efficient processing of 16S rRNA. May be needed both before and after RbfA during the maturation of 16S rRNA. It has affinity for free ribosomal 30S subunits but not for 70S ribosomes. The protein is Ribosome maturation factor RimM of Frankia alni (strain DSM 45986 / CECT 9034 / ACN14a).